The primary structure comprises 566 residues: MQPIISFEQFNFQYKHAAQPTVKDITFHIYPGEKVLIAGRSGSGKSTLAHCMNGLIPFSYEGISTGNILIAGKDPRKKSVFELSKHVGTILQDQDAQFIGLTVEEDVAFYLENECVNQDEMKKIVSESLKKVGMHTFHKQSPHELSGGQKQTVSLAGLLTTNAPMLLFDEPLANLDPASSLHTIELIKNIHKQYNKTIVIIEHRIEEMLNLDLDKIILIDEGEIVAIDTPERILASNILPSIGLREPMYIEGLKRLHFDSNNDVIYPLENLHKESISGVIKEWMEKKAFCKDTPTKKELLKVENLSFSYPNKQKALENVNLSIYEGEIVALLGHNGAGKSTLAHSLIGINKTKNSRILIDGVNINSWSIRKRGEIISYVMQNPNHMITQSTVIEEVSFTLKLKKVSKEEIKFRAEEALKICGLYPFRNWPIQALSYGQKKRLTIASVLTANPKLIILDEPTAGQDYYHYKQFMSFIRKLAKKGISFIFITHDMNLALEYADRAIVLHEGRIIANHTASIVLGHPATLQRANLKESSLFKLVKFSGIANPGKFMELYFDDIRREEGV.

ABC transporter domains lie at 5-246 and 300-533; these read ISFE…GLRE and LKVE…ANLK. Residues 39–46 and 333–340 contribute to the ATP site; these read GRSGSGKS and GHNGAGKS.

This sequence belongs to the ABC transporter superfamily.

The protein resides in the cell membrane. In terms of biological role, probably part of an ABC transporter complex. Responsible for energy coupling to the transport system. The protein is Putative ABC transporter ATP-binding protein BA_2641/GBAA_2641/BAS2461 of Bacillus anthracis.